The sequence spans 333 residues: Beta-ketoacyl-[acyl-carrier-protein] synthase III (333 aa).

Catalysis depends on residues C116 and H258. Residues 259-263 are ACP-binding; sequence QANQR. N288 is a catalytic residue.

The protein belongs to the thiolase-like superfamily. FabH family. In terms of assembly, homodimer.

It is found in the cytoplasm. The catalysed reaction is malonyl-[ACP] + acetyl-CoA + H(+) = 3-oxobutanoyl-[ACP] + CO2 + CoA. It functions in the pathway lipid metabolism; fatty acid biosynthesis. Its function is as follows. Catalyzes the condensation reaction of fatty acid synthesis by the addition to an acyl acceptor of two carbons from malonyl-ACP. Catalyzes the first condensation reaction which initiates fatty acid synthesis and may therefore play a role in governing the total rate of fatty acid production. Possesses both acetoacetyl-ACP synthase and acetyl transacylase activities. Its substrate specificity determines the biosynthesis of branched-chain and/or straight-chain of fatty acids. This is Beta-ketoacyl-[acyl-carrier-protein] synthase III from Microcystis aeruginosa (strain NIES-843 / IAM M-2473).